Here is a 1564-residue protein sequence, read N- to C-terminus: Superkiller complex protein 3 (1564 aa).

S2 bears the N-acetylserine mark. TPR repeat units follow at residues 6–39 (VKTA…EKNN), 40–73 (YNAW…EPDQ), 272–305 (GPGL…SPVC), 307–339 (SGWY…VDNL), 386–419 (PGLL…YPDL), 420–453 (AEVH…DTEV), 455–492 (EYHY…DTYM), 493–527 (GKVF…DDTD), 564–597 (KWAW…DPKD), 598–631 (FNCW…NPES), 633–665 (YSVF…KEDY), 679–713 (MAKA…RADV), 790–824 (AQHL…DSNN), 826–860 (LYWN…EQIN), 861–894 (AVAW…DPSY), 980–1013 (APAF…LQTA), 1020–1054 (NVAI…LEDI), 1056–1084 (GFAL…VESE), 1326–1359 (KWSL…NPDQ), and 1400–1433 (VPAW…ASQR).

It belongs to the SKI3 family. Component of the SKI complex which consists of SKIC2, SKIC3 and SKIC8. Interacts with PAF1. Widely expressed with the highest levels observed in vascular tissues, lymph node, pituitary, lung and intestine. Not expressed in the liver.

Its subcellular location is the cytoplasm. The protein localises to the nucleus. Component of the SKI complex, a multiprotein complex that assists the RNA-degrading exosome during the mRNA decay and quality-control pathways. The SKI complex catalyzes mRNA extraction from 80S ribosomal complexes in the 3'-5' direction and channels mRNA to the cytosolic exosome for degradation. SKI-mediated extraction of mRNA from stalled ribosomes allow binding of the Pelota-HBS1L complex and subsequent ribosome disassembly by ABCE1 for ribosome recycling. In the nucleus, the SKI complex associates with transcriptionally active genes in a manner dependent on PAF1 complex (PAF1C). This Homo sapiens (Human) protein is Superkiller complex protein 3.